The sequence spans 268 residues: Tryptophan synthase alpha chain (268 aa).

Residues E49 and D60 each act as proton acceptor in the active site.

This sequence belongs to the TrpA family. As to quaternary structure, tetramer of two alpha and two beta chains.

The enzyme catalyses (1S,2R)-1-C-(indol-3-yl)glycerol 3-phosphate + L-serine = D-glyceraldehyde 3-phosphate + L-tryptophan + H2O. Its pathway is amino-acid biosynthesis; L-tryptophan biosynthesis; L-tryptophan from chorismate: step 5/5. Its function is as follows. The alpha subunit is responsible for the aldol cleavage of indoleglycerol phosphate to indole and glyceraldehyde 3-phosphate. In Yersinia pseudotuberculosis serotype O:3 (strain YPIII), this protein is Tryptophan synthase alpha chain.